A 411-amino-acid polypeptide reads, in one-letter code: Bifunctional protein GlmU (411 aa).

Residues 1-204 (MDAIILCAGK…NGKLHGIELN (204 aa)) are pyrophosphorylase. Residues 6-9 (LCAG), Gln74, and Gly79 contribute to the UTP site. Residues Thr80, Gly130, Asn142, and Asn158 each contribute to the N-acetyl-alpha-D-glucosamine 1-phosphate site. Positions 205–224 (GYWNDIGHPWDVLSANNRFL) are linker. An N-acetyltransferase region spans residues 225 to 411 (NKIISKVSGK…DELVITKKRN (187 aa)). His308 functions as the Proton acceptor in the catalytic mechanism. Residues Ala384 and Lys401 each contribute to the acetyl-CoA site.

It in the N-terminal section; belongs to the N-acetylglucosamine-1-phosphate uridyltransferase family. In the C-terminal section; belongs to the transferase hexapeptide repeat family.

It catalyses the reaction N-acetyl-alpha-D-glucosamine 1-phosphate + UTP + H(+) = UDP-N-acetyl-alpha-D-glucosamine + diphosphate. The enzyme catalyses alpha-D-glucosamine 1-phosphate + acetyl-CoA = N-acetyl-alpha-D-glucosamine 1-phosphate + CoA + H(+). It participates in nucleotide-sugar biosynthesis; UDP-N-acetyl-alpha-D-glucosamine biosynthesis; N-acetyl-alpha-D-glucosamine 1-phosphate from alpha-D-glucosamine 6-phosphate (route II): step 2/2. Its pathway is nucleotide-sugar biosynthesis; UDP-N-acetyl-alpha-D-glucosamine biosynthesis; UDP-N-acetyl-alpha-D-glucosamine from N-acetyl-alpha-D-glucosamine 1-phosphate: step 1/1. Catalyzes the last two sequential reactions in the de novo biosynthetic pathway for UDP-N-acetyl-glucosamine (UDP-GlcNAc). Responsible for the acetylation of GlcN-1-P to GlcNAc-1-P, and for the uridyl transfer from UTP to GlcNAc-1-P, to produce UDP-GlcNAc and pyrophosphate. In Methanococcus maripaludis (strain C7 / ATCC BAA-1331), this protein is Bifunctional protein GlmU.